Consider the following 668-residue polypeptide: DNA ligase (668 aa).

NAD(+) is bound by residues 35–39 (DQEYD), 84–85 (SL), and glutamate 115. Catalysis depends on lysine 117, which acts as the N6-AMP-lysine intermediate. Arginine 138, glutamate 172, lysine 288, and lysine 312 together coordinate NAD(+). Zn(2+)-binding residues include cysteine 406, cysteine 409, cysteine 425, and cysteine 430. One can recognise a BRCT domain in the interval 589-668 (KLEGPLKGLV…EEFFDKYGES (80 aa)).

It belongs to the NAD-dependent DNA ligase family. LigA subfamily. Requires Mg(2+) as cofactor. The cofactor is Mn(2+).

It catalyses the reaction NAD(+) + (deoxyribonucleotide)n-3'-hydroxyl + 5'-phospho-(deoxyribonucleotide)m = (deoxyribonucleotide)n+m + AMP + beta-nicotinamide D-nucleotide.. DNA ligase that catalyzes the formation of phosphodiester linkages between 5'-phosphoryl and 3'-hydroxyl groups in double-stranded DNA using NAD as a coenzyme and as the energy source for the reaction. It is essential for DNA replication and repair of damaged DNA. The sequence is that of DNA ligase from Petrotoga mobilis (strain DSM 10674 / SJ95).